The primary structure comprises 175 residues: Gamma-crystallin B (175 aa).

2 Beta/gamma crystallin 'Greek key' domains span residues 2–40 and 41–83; these read GKIT…RVDS and GCWM…RLIP. Residue Lys3 is glycosylated (N-linked (Glc) (glycation) lysine; in vitro). Residues Cys19 and Cys23 are joined by a disulfide bond. Positions 84 to 88 are connecting peptide; it reads QHTGT. Beta/gamma crystallin 'Greek key' domains are found at residues 89–129 and 130–172; these read FRMR…NVLE and GSWV…RRVM.

Belongs to the beta/gamma-crystallin family.

Crystallins are the dominant structural components of the vertebrate eye lens. This chain is Gamma-crystallin B (CRYGB), found in Bos taurus (Bovine).